The following is a 406-amino-acid chain: Bifunctional enzyme IspD/IspF (406 aa).

Positions 1–247 (MSLIRVNGEA…ALFFNPAKDT (247 aa)) are 2-C-methyl-D-erythritol 4-phosphate cytidylyltransferase. A 2-C-methyl-D-erythritol 2,4-cyclodiphosphate synthase region spans residues 248–406 (FIGMGFDTHA…HVSMRYKQKL (159 aa)). Aspartate 254 and histidine 256 together coordinate a divalent metal cation. 4-CDP-2-C-methyl-D-erythritol 2-phosphate contacts are provided by residues 254–256 (DTH) and 280–281 (HS). An a divalent metal cation-binding site is contributed by histidine 288. 4-CDP-2-C-methyl-D-erythritol 2-phosphate is bound by residues 302-304 (DIG), 307-311 (FPDND), 378-381 (TTME), phenylalanine 385, and lysine 388.

In the N-terminal section; belongs to the IspD/TarI cytidylyltransferase family. IspD subfamily. The protein in the C-terminal section; belongs to the IspF family. A divalent metal cation is required as a cofactor.

The catalysed reaction is 2-C-methyl-D-erythritol 4-phosphate + CTP + H(+) = 4-CDP-2-C-methyl-D-erythritol + diphosphate. It catalyses the reaction 4-CDP-2-C-methyl-D-erythritol 2-phosphate = 2-C-methyl-D-erythritol 2,4-cyclic diphosphate + CMP. The protein operates within isoprenoid biosynthesis; isopentenyl diphosphate biosynthesis via DXP pathway; isopentenyl diphosphate from 1-deoxy-D-xylulose 5-phosphate: step 2/6. It functions in the pathway isoprenoid biosynthesis; isopentenyl diphosphate biosynthesis via DXP pathway; isopentenyl diphosphate from 1-deoxy-D-xylulose 5-phosphate: step 4/6. Its function is as follows. Bifunctional enzyme that catalyzes the formation of 4-diphosphocytidyl-2-C-methyl-D-erythritol from CTP and 2-C-methyl-D-erythritol 4-phosphate (MEP) (IspD), and catalyzes the conversion of 4-diphosphocytidyl-2-C-methyl-D-erythritol 2-phosphate (CDP-ME2P) to 2-C-methyl-D-erythritol 2,4-cyclodiphosphate (ME-CPP) with a corresponding release of cytidine 5-monophosphate (CMP) (IspF). The sequence is that of Bifunctional enzyme IspD/IspF from Helicobacter pylori (strain Shi470).